Consider the following 593-residue polypeptide: METQNTLRKPMDGTGTSPMTVLKRLWPYIRPLIGIVVLAVVTMGVVAATEAGIPALLKPLLDHGFGSHGSDSAKWYVPIAVIGLALVRGVSQYTSNYLLNYVSNRILLQLRLEMFQRMIHTGASFFQRETASTVINAIVFEVNQILSVLTGVMVTLVRDSLTVIFLLGYLFYLNWRLTLIVAVILPGIGWLVSKINRRLRRLNREHQTLTNELSYIVEETVGGYKVVKVHNGEAYEMDRFTTMSKRLRGYAMRMTISGGLAQPLTQFLASIALAVVITIAVVQSSNDQTTVGGFVAFVTSMLLVISPLKHLIDVNQPLQRGMTAAELIFGLIDEPAEPQGGGRPLSQARGEIEFRAVSFDYGAAERPTLDRISFKVAPGEMIALAGPSGSGKTTLVNLLPRFFDPTDGTILVDGVPVSDYDLHALRSQMAMVSQDVVLFNDTIAANVAYGQTPDRARVQAALEAANLADAVAAMPDGLDTLVGGNGMRLSGGQRQRLAIARAIYKDAPILILDEATSALDSESERHVQAALERLMEGRTTLVIAHRLSTIERADRILVLEAGKIVEEGSHDELLRHGGLYAHLHRIQYQQQAA.

The next 6 helical transmembrane spans lie at 33–53 (IGIVVLAVVTMGVVAATEAGI), 75–95 (WYVPIAVIGLALVRGVSQYTS), 137–157 (AIVFEVNQILSVLTGVMVTLV), 164–184 (IFLLGYLFYLNWRLTLIVAVI), 262–282 (QPLTQFLASIALAVVITIAVV), and 292–312 (GGFVAFVTSMLLVISPLKHLI). The ABC transmembrane type-1 domain maps to 37 to 320 (VLAVVTMGVV…LIDVNQPLQR (284 aa)). Residues 352–586 (IEFRAVSFDY…GGLYAHLHRI (235 aa)) enclose the ABC transporter domain. Residue 386–393 (GPSGSGKT) coordinates ATP.

The protein belongs to the ABC transporter superfamily. Lipid exporter (TC 3.A.1.106) family. Homodimer.

It localises to the cell inner membrane. The enzyme catalyses ATP + H2O + lipid A-core oligosaccharideSide 1 = ADP + phosphate + lipid A-core oligosaccharideSide 2.. Functionally, involved in lipopolysaccharide (LPS) biosynthesis. Translocates lipid A-core from the inner to the outer leaflet of the inner membrane. Transmembrane domains (TMD) form a pore in the inner membrane and the ATP-binding domain (NBD) is responsible for energy generation. This Burkholderia orbicola (strain AU 1054) protein is ATP-dependent lipid A-core flippase.